A 311-amino-acid polypeptide reads, in one-letter code: Putative F-box protein At1g31090 (311 aa).

An F-box domain is found at Gly4–Arg53. The disordered stretch occupies residues Arg287–Ala311.

The chain is Putative F-box protein At1g31090 from Arabidopsis thaliana (Mouse-ear cress).